A 154-amino-acid polypeptide reads, in one-letter code: 6,7-dimethyl-8-ribityllumazine synthase (154 aa).

5-amino-6-(D-ribitylamino)uracil contacts are provided by residues Phe22, 56–58, and 81–83; these read SFE and VLI. 86–87 is a (2S)-2-hydroxy-3-oxobutyl phosphate binding site; the sequence is ET. The active-site Proton donor is His89. Phe114 lines the 5-amino-6-(D-ribitylamino)uracil pocket. Arg128 contacts (2S)-2-hydroxy-3-oxobutyl phosphate.

This sequence belongs to the DMRL synthase family.

It carries out the reaction (2S)-2-hydroxy-3-oxobutyl phosphate + 5-amino-6-(D-ribitylamino)uracil = 6,7-dimethyl-8-(1-D-ribityl)lumazine + phosphate + 2 H2O + H(+). Its pathway is cofactor biosynthesis; riboflavin biosynthesis; riboflavin from 2-hydroxy-3-oxobutyl phosphate and 5-amino-6-(D-ribitylamino)uracil: step 1/2. Its function is as follows. Catalyzes the formation of 6,7-dimethyl-8-ribityllumazine by condensation of 5-amino-6-(D-ribitylamino)uracil with 3,4-dihydroxy-2-butanone 4-phosphate. This is the penultimate step in the biosynthesis of riboflavin. The sequence is that of 6,7-dimethyl-8-ribityllumazine synthase from Chlamydia felis (strain Fe/C-56) (Chlamydophila felis).